A 418-amino-acid chain; its full sequence is Probable aminotransferase Rv1178 (418 aa).

Residues Gly-22 to Arg-42 are disordered.

It belongs to the class-I pyridoxal-phosphate-dependent aminotransferase family. Requires pyridoxal 5'-phosphate as cofactor.

The chain is Probable aminotransferase Rv1178 from Mycobacterium tuberculosis (strain ATCC 25618 / H37Rv).